The primary structure comprises 811 residues: DNA mismatch repair protein MutS (811 aa).

583 to 590 (GPNMAGKS) is an ATP binding site.

This sequence belongs to the DNA mismatch repair MutS family.

Its function is as follows. This protein is involved in the repair of mismatches in DNA. It is possible that it carries out the mismatch recognition step. This protein has a weak ATPase activity. The protein is DNA mismatch repair protein MutS of Thermus thermophilus (strain ATCC BAA-163 / DSM 7039 / HB27).